A 418-amino-acid chain; its full sequence is Serpin A9 (418 aa).

Positions 1–25 are cleaved as a signal peptide; that stretch reads MGSSSFYRVLLLVGFCAPIFCMLSS. Residues N103, N213, and N224 are each glycosylated (N-linked (GlcNAc...) asparagine).

This sequence belongs to the serpin family.

The protein resides in the secreted. The protein is Serpin A9 (Serpina9) of Mus musculus (Mouse).